A 283-amino-acid chain; its full sequence is Pantothenate synthetase (283 aa).

30 to 37 (MGNLHDGH) contacts ATP. The Proton donor role is filled by histidine 37. (R)-pantoate is bound at residue glutamine 61. Beta-alanine is bound at residue glutamine 61. Position 149 to 152 (149 to 152 (GEKD)) interacts with ATP. Glutamine 155 serves as a coordination point for (R)-pantoate. 186–189 (LSSR) is an ATP binding site.

This sequence belongs to the pantothenate synthetase family. As to quaternary structure, homodimer.

It localises to the cytoplasm. It carries out the reaction (R)-pantoate + beta-alanine + ATP = (R)-pantothenate + AMP + diphosphate + H(+). It functions in the pathway cofactor biosynthesis; (R)-pantothenate biosynthesis; (R)-pantothenate from (R)-pantoate and beta-alanine: step 1/1. Functionally, catalyzes the condensation of pantoate with beta-alanine in an ATP-dependent reaction via a pantoyl-adenylate intermediate. The sequence is that of Pantothenate synthetase from Shigella dysenteriae serotype 1 (strain Sd197).